The chain runs to 679 residues: MEKNFKRTTVTSALPYANGPVHIGHLAGVYVPADIYVRYLRLKKEDVLFIGGSDEHGVPITIRAKKEGITPQDVVDRYHFLIKKSFEEFGISFDVYSRTSSKTHHELASDFFKKLYEKGEFIEKTSEQYYDEEAHQFLADRYITGECPHCHSEGAYGDQCEKCGTSLSPTDLINPKSAISGSKPVMKETKHWYLPLDKHETWLRQWILEEHKEWRPNVYGQCKSWLDMGLQPRAVSRDLDWGIPVPVEGAEGKVLYVWFDAPIGYISNTKELLPDSWETWWKDPETRLVHFIGKDNIVFHCIVFPAMLKAEGSYILPDNVPSNEFLNLEGDKISTSRNWAVWLHEYLEDFPGKQDVLRYVLTANAPETKDNDFTWKDFQARNNNELVAVYGNFVNRAMVLTQKYFEGKVPAAGELIDYDKETLKEFSDVKAEVEKLLNVFKFRDAQKEAMNLARIGNKYLADTEPWKLAKTDMERVGTILNISLQLVANLAIAFEPFLPFSSERLRQMLNMDSFDWAELGRNDLLPAGHQLNKPELLFEKIEDATIEAQVQKLLDTKKANEEANYKAKPIRANIEFDDFMKLDIRVGTVLECQKVPKADKLLQFKIDDGLETRTIVSGIAQHYKPEELVGKQVCFIANLAPRKLKGIVSEGMILSAENNDGSLAVVMPGREVKPGSEVK.

The 'HIGH' region signature appears at 15–25; sequence PYANGPVHIGH. Residues Cys147, Cys150, Cys160, and Cys163 each contribute to the Zn(2+) site. Residues 332-336 carry the 'KMSKS' region motif; sequence KISTS. Thr335 is a binding site for ATP. The tRNA-binding domain maps to 578 to 679; the sequence is DFMKLDIRVG…REVKPGSEVK (102 aa).

Belongs to the class-I aminoacyl-tRNA synthetase family. MetG type 1 subfamily. As to quaternary structure, homodimer. Requires Zn(2+) as cofactor.

The protein localises to the cytoplasm. It carries out the reaction tRNA(Met) + L-methionine + ATP = L-methionyl-tRNA(Met) + AMP + diphosphate. Its function is as follows. Is required not only for elongation of protein synthesis but also for the initiation of all mRNA translation through initiator tRNA(fMet) aminoacylation. The protein is Methionine--tRNA ligase of Bacteroides fragilis (strain ATCC 25285 / DSM 2151 / CCUG 4856 / JCM 11019 / LMG 10263 / NCTC 9343 / Onslow / VPI 2553 / EN-2).